Consider the following 306-residue polypeptide: GTP cyclohydrolase FolE2 (306 aa).

It belongs to the GTP cyclohydrolase IV family.

It catalyses the reaction GTP + H2O = 7,8-dihydroneopterin 3'-triphosphate + formate + H(+). It functions in the pathway cofactor biosynthesis; 7,8-dihydroneopterin triphosphate biosynthesis; 7,8-dihydroneopterin triphosphate from GTP: step 1/1. Converts GTP to 7,8-dihydroneopterin triphosphate. This Xanthomonas oryzae pv. oryzae (strain MAFF 311018) protein is GTP cyclohydrolase FolE2.